The chain runs to 314 residues: Probable manganese-dependent inorganic pyrophosphatase (314 aa).

6 residues coordinate Mn(2+): H10, D14, D16, D80, H102, and D154.

The protein belongs to the PPase class C family. It depends on Mn(2+) as a cofactor.

The protein localises to the cytoplasm. It catalyses the reaction diphosphate + H2O = 2 phosphate + H(+). The chain is Probable manganese-dependent inorganic pyrophosphatase (ppaC) from Lactococcus lactis subsp. lactis (strain IL1403) (Streptococcus lactis).